The chain runs to 270 residues: Phosphatidylglycerol--prolipoprotein diacylglyceryl transferase (270 aa).

Transmembrane regions (helical) follow at residues Val-10–Ile-30, Leu-56–Tyr-76, Trp-92–Phe-112, Phe-120–Ile-140, Ser-175–Ala-195, Met-202–Val-222, and Val-237–Leu-257. Arg-139 lines the a 1,2-diacyl-sn-glycero-3-phospho-(1'-sn-glycerol) pocket.

This sequence belongs to the Lgt family.

It localises to the cell inner membrane. It catalyses the reaction L-cysteinyl-[prolipoprotein] + a 1,2-diacyl-sn-glycero-3-phospho-(1'-sn-glycerol) = an S-1,2-diacyl-sn-glyceryl-L-cysteinyl-[prolipoprotein] + sn-glycerol 1-phosphate + H(+). It functions in the pathway protein modification; lipoprotein biosynthesis (diacylglyceryl transfer). In terms of biological role, catalyzes the transfer of the diacylglyceryl group from phosphatidylglycerol to the sulfhydryl group of the N-terminal cysteine of a prolipoprotein, the first step in the formation of mature lipoproteins. This is Phosphatidylglycerol--prolipoprotein diacylglyceryl transferase from Pseudomonas savastanoi pv. phaseolicola (strain 1448A / Race 6) (Pseudomonas syringae pv. phaseolicola (strain 1448A / Race 6)).